We begin with the raw amino-acid sequence, 314 residues long: 4-hydroxy-3-methylbut-2-enyl diphosphate reductase (314 aa).

A [4Fe-4S] cluster-binding site is contributed by cysteine 12. 2 residues coordinate (2E)-4-hydroxy-3-methylbut-2-enyl diphosphate: histidine 41 and histidine 74. Positions 41 and 74 each coordinate dimethylallyl diphosphate. 2 residues coordinate isopentenyl diphosphate: histidine 41 and histidine 74. Residue cysteine 96 participates in [4Fe-4S] cluster binding. A (2E)-4-hydroxy-3-methylbut-2-enyl diphosphate-binding site is contributed by histidine 124. Histidine 124 is a dimethylallyl diphosphate binding site. Histidine 124 is an isopentenyl diphosphate binding site. Catalysis depends on glutamate 126, which acts as the Proton donor. Threonine 167 serves as a coordination point for (2E)-4-hydroxy-3-methylbut-2-enyl diphosphate. Cysteine 197 is a binding site for [4Fe-4S] cluster. (2E)-4-hydroxy-3-methylbut-2-enyl diphosphate contacts are provided by serine 225, serine 226, asparagine 227, and serine 269. Residues serine 225, serine 226, asparagine 227, and serine 269 each coordinate dimethylallyl diphosphate. Serine 225, serine 226, asparagine 227, and serine 269 together coordinate isopentenyl diphosphate.

The protein belongs to the IspH family. [4Fe-4S] cluster is required as a cofactor.

It carries out the reaction isopentenyl diphosphate + 2 oxidized [2Fe-2S]-[ferredoxin] + H2O = (2E)-4-hydroxy-3-methylbut-2-enyl diphosphate + 2 reduced [2Fe-2S]-[ferredoxin] + 2 H(+). It catalyses the reaction dimethylallyl diphosphate + 2 oxidized [2Fe-2S]-[ferredoxin] + H2O = (2E)-4-hydroxy-3-methylbut-2-enyl diphosphate + 2 reduced [2Fe-2S]-[ferredoxin] + 2 H(+). It participates in isoprenoid biosynthesis; dimethylallyl diphosphate biosynthesis; dimethylallyl diphosphate from (2E)-4-hydroxy-3-methylbutenyl diphosphate: step 1/1. The protein operates within isoprenoid biosynthesis; isopentenyl diphosphate biosynthesis via DXP pathway; isopentenyl diphosphate from 1-deoxy-D-xylulose 5-phosphate: step 6/6. Catalyzes the conversion of 1-hydroxy-2-methyl-2-(E)-butenyl 4-diphosphate (HMBPP) into a mixture of isopentenyl diphosphate (IPP) and dimethylallyl diphosphate (DMAPP). Acts in the terminal step of the DOXP/MEP pathway for isoprenoid precursor biosynthesis. The polypeptide is 4-hydroxy-3-methylbut-2-enyl diphosphate reductase (Haemophilus influenzae (strain ATCC 51907 / DSM 11121 / KW20 / Rd)).